The following is a 216-amino-acid chain: Uracil phosphoribosyltransferase (216 aa).

5-phospho-alpha-D-ribose 1-diphosphate is bound by residues Arg84, Arg109, and 137-145; that span reads DPMLATGGS. Uracil-binding positions include Ile202 and 207–209; that span reads GDA. Asp208 is a 5-phospho-alpha-D-ribose 1-diphosphate binding site.

Belongs to the UPRTase family. Requires Mg(2+) as cofactor.

The catalysed reaction is UMP + diphosphate = 5-phospho-alpha-D-ribose 1-diphosphate + uracil. The protein operates within pyrimidine metabolism; UMP biosynthesis via salvage pathway; UMP from uracil: step 1/1. Allosterically activated by GTP. Its function is as follows. Catalyzes the conversion of uracil and 5-phospho-alpha-D-ribose 1-diphosphate (PRPP) to UMP and diphosphate. The polypeptide is Uracil phosphoribosyltransferase (Nostoc sp. (strain PCC 7120 / SAG 25.82 / UTEX 2576)).